The following is a 744-amino-acid chain: Translation initiation factor IF-2, chloroplastic (744 aa).

A disordered region spans residues 113-146 (NSEGSFKSGKQKKKEKGKHKQNVNKDIHHTKNNR). A compositionally biased stretch (basic residues) spans 121 to 134 (GKQKKKEKGKHKQN). A tr-type G domain is found at 244–417 (NRAPIVTILG…CSLAEFINLK (174 aa)). Positions 253-260 (GHVDHGKT) are G1. GTP is bound at residue 253–260 (GHVDHGKT). The G2 stretch occupies residues 278-282 (GITQS). The tract at residues 303-306 (DTPG) is G3. GTP-binding positions include 303–307 (DTPGH) and 357–360 (NKID). The tract at residues 357–360 (NKID) is G4. Residues 393 to 395 (SAL) are G5.

Belongs to the TRAFAC class translation factor GTPase superfamily. Classic translation factor GTPase family. IF-2 subfamily.

It is found in the plastid. The protein resides in the chloroplast. In terms of biological role, one of the essential components for the initiation of protein synthesis. Protects formylmethionyl-tRNA from spontaneous hydrolysis and promotes its binding to the 30S ribosomal subunits. Also involved in the hydrolysis of GTP during the formation of the 70S ribosomal complex. This Gracilaria tenuistipitata var. liui (Red alga) protein is Translation initiation factor IF-2, chloroplastic (infB).